We begin with the raw amino-acid sequence, 358 residues long: Mannonate dehydratase (358 aa).

Belongs to the mannonate dehydratase family. Fe(2+) serves as cofactor. Mn(2+) is required as a cofactor.

It carries out the reaction D-mannonate = 2-dehydro-3-deoxy-D-gluconate + H2O. The protein operates within carbohydrate metabolism; pentose and glucuronate interconversion. Catalyzes the dehydration of D-mannonate. The protein is Mannonate dehydratase of Shouchella clausii (strain KSM-K16) (Alkalihalobacillus clausii).